The chain runs to 463 residues: L-seryl-tRNA(Sec) selenium transferase (463 aa).

N6-(pyridoxal phosphate)lysine is present on lysine 295.

The protein belongs to the SelA family. In terms of assembly, homodecamer; pentamer of dimers. Binds only one seryl-tRNA(Sec) per dimer. Requires pyridoxal 5'-phosphate as cofactor.

The protein localises to the cytoplasm. The enzyme catalyses L-seryl-tRNA(Sec) + selenophosphate + H(+) = L-selenocysteinyl-tRNA(Sec) + phosphate. It participates in aminoacyl-tRNA biosynthesis; selenocysteinyl-tRNA(Sec) biosynthesis; selenocysteinyl-tRNA(Sec) from L-seryl-tRNA(Sec) (bacterial route): step 1/1. Functionally, converts seryl-tRNA(Sec) to selenocysteinyl-tRNA(Sec) required for selenoprotein biosynthesis. The protein is L-seryl-tRNA(Sec) selenium transferase of Shigella boydii serotype 18 (strain CDC 3083-94 / BS512).